An 888-amino-acid chain; its full sequence is Serine/arginine repetitive matrix protein 1 (888 aa).

Positions 27–126 constitute a PWI domain; it reads QLKFAECLEK…AGIPTAFLEL (100 aa). Positions 139–169 are enriched in basic and acidic residues; it reads EKLASMKKQDEDKEKRDKEDKDNREKRDRSR. A disordered region spans residues 139-888; it reads EKLASMKKQD…MRKAQVSPPS (750 aa). Residues 170 to 206 are compositionally biased toward basic residues; it reads SPRRRKSRSPSPRRRSSPIRRERKRSHSRSPHHRTKS. Composition is skewed to basic and acidic residues over residues 213–232 and 254–276; these read PEKK…KETV and ETKE…EKTR. Composition is skewed to basic residues over residues 277–325 and 332–347; these read QRSP…RTPP and PRHR…RRRS. 2 stretches are compositionally biased toward low complexity: residues 348–364 and 473–496; these read SASL…SRSR and SVQQ…SSSS. 2 stretches are compositionally biased toward basic residues: residues 528–554 and 561–585; these read PRKR…RRRS and PRRR…RSPS. Over residues 586 to 598 the composition is skewed to low complexity; that stretch reads PRRYSPPIQRRYS. 2 stretches are compositionally biased toward basic residues: residues 614 to 629 and 642 to 656; these read PKRR…RRVS and AKRR…HRKG. Basic and acidic residues predominate over residues 662-677; sequence SNRETRSPPQNKRDSP. Composition is skewed to low complexity over residues 697–712, 728–749, and 763–775; these read ASAS…PSTR, ASTP…SGSP, and ARSR…WSPA. The span at 780–790 shows a compositional bias: polar residues; sequence SPTQSPSPARN. Residues 798 to 823 show a composition bias toward basic residues; that stretch reads KKKKKKKDKKHKKDKKHKKHKKHKKE. Positions 826–843 are enriched in low complexity; sequence AVAAAPAAVAAADTTSAQ. Residues 866 to 876 are compositionally biased toward basic and acidic residues; it reads DLEKHLREKAL.

It belongs to the splicing factor SR family.

The protein localises to the nucleus. Involved in pre-mRNA splicing and processing events. The polypeptide is Serine/arginine repetitive matrix protein 1 (SRRM1) (Gallus gallus (Chicken)).